The sequence spans 124 residues: Small ribosomal subunit protein uS12 (124 aa).

A 3-methylthioaspartic acid modification is found at aspartate 89. The disordered stretch occupies residues 104–124 (TAGVENRKQSRSKYGAKRPKK). Residues 112 to 124 (QSRSKYGAKRPKK) show a composition bias toward basic residues.

This sequence belongs to the universal ribosomal protein uS12 family. Part of the 30S ribosomal subunit. Contacts proteins S8 and S17. May interact with IF1 in the 30S initiation complex.

Functionally, with S4 and S5 plays an important role in translational accuracy. Its function is as follows. Interacts with and stabilizes bases of the 16S rRNA that are involved in tRNA selection in the A site and with the mRNA backbone. Located at the interface of the 30S and 50S subunits, it traverses the body of the 30S subunit contacting proteins on the other side and probably holding the rRNA structure together. The combined cluster of proteins S8, S12 and S17 appears to hold together the shoulder and platform of the 30S subunit. This chain is Small ribosomal subunit protein uS12, found in Pseudothermotoga lettingae (strain ATCC BAA-301 / DSM 14385 / NBRC 107922 / TMO) (Thermotoga lettingae).